The following is a 97-amino-acid chain: Putative regulatory protein Dole_1911 (97 aa).

It belongs to the RemA family.

This chain is Putative regulatory protein Dole_1911, found in Desulfosudis oleivorans (strain DSM 6200 / JCM 39069 / Hxd3) (Desulfococcus oleovorans).